The sequence spans 417 residues: Tyrosine aminotransferase (417 aa).

Lysine 249 carries the post-translational modification N6-(pyridoxal phosphate)lysine.

Belongs to the class-I pyridoxal-phosphate-dependent aminotransferase family. As to quaternary structure, homodimer. Requires pyridoxal 5'-phosphate as cofactor.

It carries out the reaction L-tyrosine + 2-oxoglutarate = 3-(4-hydroxyphenyl)pyruvate + L-glutamate. The protein operates within amino-acid degradation; L-phenylalanine degradation; acetoacetate and fumarate from L-phenylalanine: step 2/6. In terms of biological role, transaminase involved in tyrosine breakdown. Converts tyrosine to p-hydroxyphenylpyruvate. Has much lower affinity and transaminase activity towards phenylalanine. The sequence is that of Tyrosine aminotransferase (tat) from Dictyostelium discoideum (Social amoeba).